The primary structure comprises 355 residues: UDP-N-acetylglucosamine--N-acetylmuramyl-(pentapeptide) pyrophosphoryl-undecaprenol N-acetylglucosamine transferase (355 aa).

Residues 14–16 (TGG), asparagine 123, arginine 164, serine 190, and glutamine 284 contribute to the UDP-N-acetyl-alpha-D-glucosamine site.

It belongs to the glycosyltransferase 28 family. MurG subfamily.

It localises to the cell inner membrane. The enzyme catalyses di-trans,octa-cis-undecaprenyl diphospho-N-acetyl-alpha-D-muramoyl-L-alanyl-D-glutamyl-meso-2,6-diaminopimeloyl-D-alanyl-D-alanine + UDP-N-acetyl-alpha-D-glucosamine = di-trans,octa-cis-undecaprenyl diphospho-[N-acetyl-alpha-D-glucosaminyl-(1-&gt;4)]-N-acetyl-alpha-D-muramoyl-L-alanyl-D-glutamyl-meso-2,6-diaminopimeloyl-D-alanyl-D-alanine + UDP + H(+). It functions in the pathway cell wall biogenesis; peptidoglycan biosynthesis. Functionally, cell wall formation. Catalyzes the transfer of a GlcNAc subunit on undecaprenyl-pyrophosphoryl-MurNAc-pentapeptide (lipid intermediate I) to form undecaprenyl-pyrophosphoryl-MurNAc-(pentapeptide)GlcNAc (lipid intermediate II). The polypeptide is UDP-N-acetylglucosamine--N-acetylmuramyl-(pentapeptide) pyrophosphoryl-undecaprenol N-acetylglucosamine transferase (Synechocystis sp. (strain ATCC 27184 / PCC 6803 / Kazusa)).